The primary structure comprises 764 residues: Putative alpha-1,3-mannosyltransferase MNN13 (764 aa).

At 1–13 (MIKPILGTKKIRR) the chain is on the cytoplasmic side. Residues 14–34 (VICIIIGLFCILLLIGIFKHN) form a helical membrane-spanning segment. The Lumenal portion of the chain corresponds to 35 to 764 (STNSVNNEAS…YLGDVWVGKY (730 aa)). Asn-45 and Asn-204 each carry an N-linked (GlcNAc...) asparagine glycan.

This sequence belongs to the MNN1/MNT family.

The protein resides in the golgi apparatus membrane. It functions in the pathway protein modification; protein glycosylation. Functionally, responsible for addition of the terminal mannose residues to the outer chain of core N-linked polysaccharides and to O-linked mannotriose. Implicated in late Golgi modifications. The sequence is that of Putative alpha-1,3-mannosyltransferase MNN13 (MNN13) from Candida albicans (strain SC5314 / ATCC MYA-2876) (Yeast).